We begin with the raw amino-acid sequence, 420 residues long: MKLLVFGISYKTAPISLRERVIFSPENINIALNNLLKKSDILGGVILSTCNRTEVYLSIKNFYKAKKIIILWLYKFFNDLKIKEIKNNFYSYIDNYAVSHLMRVTSGLDSMILGEHQILSQVKSAFFRSLKNKNISIDLQKLFESAFSVAKKIRSETKIGSYSISIPYIICVLLKKIFISFTEIKVMLIGSGTINELIAKQLFKYKIKDLFISNRTIDHAKNLAIKVNGCVVEFNEIFKNLNKMQVIITSTYSRKLIITYKIIKSIIEKNKNKKIIFIDISIPRNIDKKIKKITGVHLYTLEDLKDLITNNLEKRKNAATLAENIIKKESIKFMSHIKGYYSSEIIKKYRFQINKLKKIYEKKALLELKLGNNPENIIKKLTYKLTNRLVHKPTKLLYNTSCSKNNKDLYDLYNKLKIDL.

Substrate is bound by residues 49-52 (TCNR), Ser110, 115-117 (EHQ), and Gln121. The active-site Nucleophile is the Cys50. 190–195 (GSGTIN) contributes to the NADP(+) binding site.

The protein belongs to the glutamyl-tRNA reductase family. Homodimer.

It catalyses the reaction (S)-4-amino-5-oxopentanoate + tRNA(Glu) + NADP(+) = L-glutamyl-tRNA(Glu) + NADPH + H(+). It functions in the pathway porphyrin-containing compound metabolism; protoporphyrin-IX biosynthesis; 5-aminolevulinate from L-glutamyl-tRNA(Glu): step 1/2. Functionally, catalyzes the NADPH-dependent reduction of glutamyl-tRNA(Glu) to glutamate 1-semialdehyde (GSA). This Wigglesworthia glossinidia brevipalpis protein is Glutamyl-tRNA reductase.